A 346-amino-acid polypeptide reads, in one-letter code: N-acetyl-gamma-glutamyl-phosphate reductase (346 aa).

Residue Cys150 is part of the active site.

Belongs to the NAGSA dehydrogenase family. Type 1 subfamily.

The protein localises to the cytoplasm. It catalyses the reaction N-acetyl-L-glutamate 5-semialdehyde + phosphate + NADP(+) = N-acetyl-L-glutamyl 5-phosphate + NADPH + H(+). Its pathway is amino-acid biosynthesis; L-arginine biosynthesis; N(2)-acetyl-L-ornithine from L-glutamate: step 3/4. Its function is as follows. Catalyzes the NADPH-dependent reduction of N-acetyl-5-glutamyl phosphate to yield N-acetyl-L-glutamate 5-semialdehyde. The chain is N-acetyl-gamma-glutamyl-phosphate reductase from Desulforamulus reducens (strain ATCC BAA-1160 / DSM 100696 / MI-1) (Desulfotomaculum reducens).